Consider the following 191-residue polypeptide: Cell division protein SepF (191 aa).

Over residues 153–178 (FPEEASPSNVSSKKTSQYKFETNTTP) the composition is skewed to polar residues. The interval 153–191 (FPEEASPSNVSSKKTSQYKFETNTTPEPAWGESKLSAYN) is disordered.

It belongs to the SepF family. As to quaternary structure, homodimer. Interacts with FtsZ.

The protein resides in the cytoplasm. In terms of biological role, cell division protein that is part of the divisome complex and is recruited early to the Z-ring. Probably stimulates Z-ring formation, perhaps through the cross-linking of FtsZ protofilaments. Its function overlaps with FtsA. The protein is Cell division protein SepF of Prochlorococcus marinus subsp. pastoris (strain CCMP1986 / NIES-2087 / MED4).